The primary structure comprises 463 residues: ATP synthase subunit beta (463 aa).

Position 151-158 (151-158 (GGAGVGKT)) interacts with ATP.

It belongs to the ATPase alpha/beta chains family. As to quaternary structure, F-type ATPases have 2 components, CF(1) - the catalytic core - and CF(0) - the membrane proton channel. CF(1) has five subunits: alpha(3), beta(3), gamma(1), delta(1), epsilon(1). CF(0) has three main subunits: a(1), b(2) and c(9-12). The alpha and beta chains form an alternating ring which encloses part of the gamma chain. CF(1) is attached to CF(0) by a central stalk formed by the gamma and epsilon chains, while a peripheral stalk is formed by the delta and b chains.

It localises to the cell membrane. It catalyses the reaction ATP + H2O + 4 H(+)(in) = ADP + phosphate + 5 H(+)(out). Functionally, produces ATP from ADP in the presence of a proton gradient across the membrane. The catalytic sites are hosted primarily by the beta subunits. This is ATP synthase subunit beta from Clostridium botulinum (strain Okra / Type B1).